Consider the following 1447-residue polypeptide: DNA topoisomerase 2 (1447 aa).

Residues N72, N101, 129 to 131, and 142 to 149 contribute to the ATP site; these read SSN and GRNGYGAK. Residues 323–325 are interaction with DNA; sequence KKK. Position 357-359 (357-359) interacts with ATP; the sequence is QTK. The 118-residue stretch at 435–552 folds into the Toprim domain; sequence CTLILTEGDS…ELLRLPFLEE (118 aa). Residues E441, D521, and D523 each contribute to the Mg(2+) site. A Topo IIA-type catalytic domain is found at 695–1169; sequence IPSLVDGLKP…TPEMLWLDDL (475 aa). Y785 acts as the O-(5'-phospho-DNA)-tyrosine intermediate in catalysis. An interaction with DNA region spans residues 972–981; it reads KLTTTLSTNQ. Disordered stretches follow at residues 1079–1110, 1183–1231, and 1246–1447; these read EDAEQADEEDEEEEEAAPSVSSKAKKEKEVDP, ERAE…DGEP, and AAAK…DFNC. Residues 1081 to 1094 show a composition bias toward acidic residues; sequence AEQADEEDEEEEEA. A compositionally biased stretch (basic and acidic residues) spans 1255–1281; it reads KEPKKPKEPKEPKVKKEPKGKQIKAEP. A compositionally biased stretch (acidic residues) spans 1283 to 1293; sequence ASGDEVDEFDA. S1284 carries the post-translational modification Phosphoserine. 2 stretches are compositionally biased toward basic and acidic residues: residues 1310 to 1325 and 1332 to 1359; these read VKKEPGEKKPRQKKEN and SKIDFSKAKAKKSDDDVEEVTPRAERPG. S1344 bears the Phosphoserine mark. T1352 carries the phosphothreonine modification. Residues S1374, S1385, S1392, and S1396 each carry the phosphoserine modification. The span at 1374–1394 shows a compositional bias: acidic residues; that stretch reads SDEEEDGGNVGSDDDGNASDD. Residues 1395-1408 are compositionally biased toward basic and acidic residues; sequence DSPKRPAKRGREDE. Positions 1413-1423 are enriched in basic residues; sequence AKKKAPPKKRR. Acidic residues predominate over residues 1427-1447; the sequence is ESDDDDIEIDEDDDDDSDFNC.

This sequence belongs to the type II topoisomerase family. As to quaternary structure, homodimer. Interacts with mod(mdg4). Interacts with barr. Interacts with ph-p. Interacts with mle; the interaction mediates association with the MSL dosage compensation complex. Mg(2+) is required as a cofactor. The cofactor is Mn(2+). Ca(2+) serves as cofactor. Phosphorylated. Phosphorylation by casein kinase II enhances ATPase activity.

The protein resides in the nucleus. It is found in the chromosome. The protein localises to the cytoplasm. The enzyme catalyses ATP-dependent breakage, passage and rejoining of double-stranded DNA.. Control of topological states of DNA by transient breakage and subsequent rejoining of DNA strands. Topoisomerase II makes double-strand breaks. Essential during mitosis and meiosis for proper segregation of daughter chromosomes. During meiosis, it disrupts heterochromatic connections between achiasmate and chiasmate homologs after spindle assembly so that chromosomes can separate at prometaphase I. During mitosis, it functions in the separation of sister chromatids by establishing amphitelic kinetochore attachments in mitotic spindles. May have a role in chromatin condensation and chromosome structure. May be involved in X-chromosome dosage compensation, perhaps by modifying the topological state of compensated genes. Regulates activity of the gypsy chromatin insulator complex by binding to mod(mdg4) and preventing its degradation. This Drosophila melanogaster (Fruit fly) protein is DNA topoisomerase 2.